A 168-amino-acid chain; its full sequence is Disulfide bond formation protein B 2 (168 aa).

The Cytoplasmic segment spans residues 1–14 (MSAPIGATRAERWT). The helical transmembrane segment at 15-31 (LLAIGVASFELVAGALW) threads the bilayer. Topologically, residues 32-49 (IQLAWQEDPCPLCIIQRY) are periplasmic. Cysteine 41 and cysteine 44 form a disulfide bridge. The chain crosses the membrane as a helical span at residues 50–64 (LFLLIALFTFVAAAG). The Cytoplasmic portion of the chain corresponds to 65–69 (GRRVA). A helical membrane pass occupies residues 70-87 (LLRVLSLTTALAGAAVAV). Over 88 to 142 (RHIYVQAHPGFSCGFDALQPVIDSLPPAHWLPPVFKVGGLCETLYPPILGLSLPM) the chain is Periplasmic. The cysteines at positions 100 and 128 are disulfide-linked. A helical membrane pass occupies residues 143-161 (WALVGFSAIAVALGWRIRA). The Cytoplasmic segment spans residues 162–168 (QAVIRTA).

The protein belongs to the DsbB family.

Its subcellular location is the cell inner membrane. In terms of biological role, required for disulfide bond formation in some periplasmic proteins. Acts by oxidizing the DsbA protein. This is Disulfide bond formation protein B 2 from Burkholderia lata (strain ATCC 17760 / DSM 23089 / LMG 22485 / NCIMB 9086 / R18194 / 383).